The primary structure comprises 277 residues: Acetyl-coenzyme A carboxylase carboxyl transferase subunit beta (277 aa).

In terms of domain architecture, CoA carboxyltransferase N-terminal spans 25–277 (LVRRCPVCHT…DLLRLHKGES (253 aa)). Residues Cys-29, Cys-32, Cys-47, and Cys-50 each contribute to the Zn(2+) site. The C4-type zinc-finger motif lies at 29-50 (CPVCHTTFLTDHWEPTRLCPAC).

This sequence belongs to the AccD/PCCB family. As to quaternary structure, acetyl-CoA carboxylase is a heterohexamer composed of biotin carboxyl carrier protein (AccB), biotin carboxylase (AccC) and two subunits each of ACCase subunit alpha (AccA) and ACCase subunit beta (AccD). It depends on Zn(2+) as a cofactor.

The protein localises to the cytoplasm. It carries out the reaction N(6)-carboxybiotinyl-L-lysyl-[protein] + acetyl-CoA = N(6)-biotinyl-L-lysyl-[protein] + malonyl-CoA. Its pathway is lipid metabolism; malonyl-CoA biosynthesis; malonyl-CoA from acetyl-CoA: step 1/1. Component of the acetyl coenzyme A carboxylase (ACC) complex. Biotin carboxylase (BC) catalyzes the carboxylation of biotin on its carrier protein (BCCP) and then the CO(2) group is transferred by the transcarboxylase to acetyl-CoA to form malonyl-CoA. This is Acetyl-coenzyme A carboxylase carboxyl transferase subunit beta from Levilactobacillus brevis (strain ATCC 367 / BCRC 12310 / CIP 105137 / JCM 1170 / LMG 11437 / NCIMB 947 / NCTC 947) (Lactobacillus brevis).